The primary structure comprises 231 residues: Probable transaldolase (231 aa).

Catalysis depends on Lys-83, which acts as the Schiff-base intermediate with substrate.

Belongs to the transaldolase family. Type 3B subfamily.

The protein localises to the cytoplasm. The enzyme catalyses D-sedoheptulose 7-phosphate + D-glyceraldehyde 3-phosphate = D-erythrose 4-phosphate + beta-D-fructose 6-phosphate. The protein operates within carbohydrate degradation; pentose phosphate pathway; D-glyceraldehyde 3-phosphate and beta-D-fructose 6-phosphate from D-ribose 5-phosphate and D-xylulose 5-phosphate (non-oxidative stage): step 2/3. In terms of biological role, transaldolase is important for the balance of metabolites in the pentose-phosphate pathway. In Rhodospirillum centenum (strain ATCC 51521 / SW), this protein is Probable transaldolase.